Reading from the N-terminus, the 83-residue chain is Small ribosomal subunit protein uS17 (83 aa).

This sequence belongs to the universal ribosomal protein uS17 family. In terms of assembly, part of the 30S ribosomal subunit.

Its function is as follows. One of the primary rRNA binding proteins, it binds specifically to the 5'-end of 16S ribosomal RNA. In Thermodesulfovibrio yellowstonii (strain ATCC 51303 / DSM 11347 / YP87), this protein is Small ribosomal subunit protein uS17.